The following is a 433-amino-acid chain: Arabinooligosaccharide-binding protein (433 aa).

Positions 1-21 (MKKMTVCFLVLMMLLTLVIAG) are cleaved as a signal peptide. The N-palmitoyl cysteine moiety is linked to residue Cys22. Cys22 carries S-diacylglycerol cysteine lipidation.

Belongs to the bacterial solute-binding protein 1 family. The complex is composed of two ATP-binding proteins (MsmX), two transmembrane proteins (AraP and AraQ) and a solute-binding protein (AraN).

The protein resides in the cell membrane. Its function is as follows. Part of the ABC transporter complex AraNPQ involved in the uptake of arabinooligosaccharides. Transports alpha-1,5-arabinooligosaccharides, at least up to four L-arabinosyl units. AraN captures the substrate and delivers it to the two transmembrane components. In Bacillus subtilis (strain 168), this protein is Arabinooligosaccharide-binding protein.